We begin with the raw amino-acid sequence, 304 residues long: Protoheme IX farnesyltransferase (304 aa).

A run of 7 helical transmembrane segments spans residues 24–44 (VMTL…GTIH), 45–65 (PVIA…AAAL), 107–127 (VFVM…FSIF), 145–165 (IVIG…AVTG), 172–192 (VLLF…LALF), 234–254 (WIGG…LVFV), and 277–297 (LFGY…GDRL).

This sequence belongs to the UbiA prenyltransferase family. Protoheme IX farnesyltransferase subfamily.

It localises to the cell inner membrane. The enzyme catalyses heme b + (2E,6E)-farnesyl diphosphate + H2O = Fe(II)-heme o + diphosphate. It functions in the pathway porphyrin-containing compound metabolism; heme O biosynthesis; heme O from protoheme: step 1/1. Converts heme B (protoheme IX) to heme O by substitution of the vinyl group on carbon 2 of heme B porphyrin ring with a hydroxyethyl farnesyl side group. The chain is Protoheme IX farnesyltransferase from Novosphingobium aromaticivorans (strain ATCC 700278 / DSM 12444 / CCUG 56034 / CIP 105152 / NBRC 16084 / F199).